A 261-amino-acid polypeptide reads, in one-letter code: [LysW]-aminoadipate/[LysW]-glutamate kinase (261 aa).

Substrate contacts are provided by residues glycine 35 to glycine 36, arginine 62, and asparagine 166.

This sequence belongs to the acetylglutamate kinase family. LysZ subfamily.

The protein localises to the cytoplasm. It catalyses the reaction [amino-group carrier protein]-C-terminal-N-(1,4-dicarboxybutan-1-yl)-L-glutamine + ATP = [amino-group carrier protein]-C-terminal-N-(1-carboxy-5-phosphooxy-5-oxopentan-1-yl)-L-glutamine + ADP. The catalysed reaction is [amino-group carrier protein]-C-terminal-gamma-(L-glutamyl)-L-glutamate + ATP = [amino-group carrier protein]-C-terminal-gamma-(5-phospho-L-glutamyl)-L-glutamate + ADP. It participates in amino-acid biosynthesis; L-lysine biosynthesis via AAA pathway; L-lysine from L-alpha-aminoadipate (Thermus route): step 2/5. It functions in the pathway amino-acid biosynthesis; L-arginine biosynthesis. Involved in both the arginine and lysine biosynthetic pathways. Phosphorylates the LysW-bound precursors glutamate (for arginine biosynthesis), respectively alpha-aminoadipate (for lysine biosynthesis). The protein is [LysW]-aminoadipate/[LysW]-glutamate kinase of Sulfurisphaera tokodaii (strain DSM 16993 / JCM 10545 / NBRC 100140 / 7) (Sulfolobus tokodaii).